Reading from the N-terminus, the 122-residue chain is Large ribosomal subunit protein uL14 (122 aa).

The protein belongs to the universal ribosomal protein uL14 family. As to quaternary structure, part of the 50S ribosomal subunit. Forms a cluster with proteins L3 and L19. In the 70S ribosome, L14 and L19 interact and together make contacts with the 16S rRNA in bridges B5 and B8.

Binds to 23S rRNA. Forms part of two intersubunit bridges in the 70S ribosome. The protein is Large ribosomal subunit protein uL14 of Lactococcus lactis subsp. lactis (strain IL1403) (Streptococcus lactis).